Reading from the N-terminus, the 282-residue chain is Dof zinc finger protein 4 (282 aa).

The segment at 45–99 (VKCPRCESTNTKFCYYNNYNLSQPRHFCKSCRRYWTKGGVLRNVPVGGGCRKTKR) adopts a Dof-type zinc-finger fold. Residues C47, C50, C72, and C75 each coordinate Zn(2+). Residues 89–161 (PVGGGCRKTK…TTPATPSSNT (73 aa)) form a disordered region. Low complexity-rich tracts occupy residues 102-117 (SSSAASSAPSTPTAAT) and 125-161 (RASASSPRSSSGGSGNTSPTAAAATTPTTPATPSSNT).

It is found in the nucleus. Transcription factor that may transactivate seed storage protein genes in developing seeds. The chain is Dof zinc finger protein 4 from Oryza sativa subsp. japonica (Rice).